A 199-amino-acid chain; its full sequence is GTP cyclohydrolase-2 (199 aa).

Residue 49-53 participates in GTP binding; the sequence is RIHSE. Cys54, Cys65, and Cys67 together coordinate Zn(2+). Residues Gln70, 92 to 94, and Thr114 each bind GTP; that span reads EGR. Asp126 acts as the Proton acceptor in catalysis. Arg128 serves as the catalytic Nucleophile. Residues Thr149 and Lys154 each coordinate GTP.

Belongs to the GTP cyclohydrolase II family. Homodimer. The cofactor is Zn(2+).

The enzyme catalyses GTP + 4 H2O = 2,5-diamino-6-hydroxy-4-(5-phosphoribosylamino)-pyrimidine + formate + 2 phosphate + 3 H(+). Its pathway is cofactor biosynthesis; riboflavin biosynthesis; 5-amino-6-(D-ribitylamino)uracil from GTP: step 1/4. Its function is as follows. Catalyzes the conversion of GTP to 2,5-diamino-6-ribosylamino-4(3H)-pyrimidinone 5'-phosphate (DARP), formate and pyrophosphate. In Blochmanniella pennsylvanica (strain BPEN), this protein is GTP cyclohydrolase-2.